Reading from the N-terminus, the 724-residue chain is Hyperosmolality-gated Ca2+ permeable channel 3.1 (724 aa).

Residues 1–4 lie on the Extracellular side of the membrane; the sequence is MEFG. Residues 5–25 form a helical membrane-spanning segment; that stretch reads SFLVSLGTSFVIFVILMLLFT. Residues 26 to 85 are Cytoplasmic-facing; that stretch reads WLSRKSGNAPIYYPNRILKGLEPWEGTSLTRNPFAWMREALTSSEQDVVNLSGVDTAVHF. A helical membrane pass occupies residues 86-108; it reads VFLSTVLGIFACSSLLLLPTLLP. The Extracellular segment spans residues 109 to 147; sequence LAATDNNIKNTKNATDTTSKGTFSQLDNLSMANITKKSS. A helical membrane pass occupies residues 148–170; the sequence is RLWAFLGAVYWISLVTYFFLWKA. Residues 171-358 are Cytoplasmic-facing; sequence YKHVSSLRAQ…WQNLNIKLFS (188 aa). A coiled-coil region spans residues 241 to 309; that stretch reads EKLEGYKKKL…KAVLAEKQQT (69 aa). The chain crosses the membrane as a helical span at residues 359-385; sequence RIIRQYFIYFFVAVTILFYMIPIAFVS. Residues 386-411 are Extracellular-facing; that stretch reads AITTLKNLQRIIPFIKPVVEITAIRT. Residues 412 to 439 form a helical membrane-spanning segment; that stretch reads VLESFLPQIALIVFLAMLPKLLLFLSKA. Residues 440-448 lie on the Cytoplasmic side of the membrane; it reads EGIPSQSHA. The chain crosses the membrane as a helical span at residues 449–472; sequence IRAASGKYFYFSVFNVFIGVTLAG. Over 473–497 the chain is Extracellular; it reads TLFNTVKDIAKNPKLDMIINLLATS. The chain crosses the membrane as a helical span at residues 498 to 529; the sequence is LPKSATFFLTYVALKFFIGYGLELSRIIPLII. The Cytoplasmic segment spans residues 530–554; that stretch reads FHLKKKYLCKTEAEVKEAWYPGDLS. Residues 555-574 form a helical membrane-spanning segment; that stretch reads YATRVPGDMLILTITFCYSV. A topological domain (extracellular) is located at residue isoleucine 575. The chain crosses the membrane as a helical span at residues 576–594; sequence APLILIFGITYFGLGWLVL. Over 595–612 the chain is Cytoplasmic; that stretch reads RNQALKVYVPSYESYGRM. The helical transmembrane segment at 613–636 threads the bilayer; that stretch reads WPHIHQRILAALFLFQVVMFGYLG. Residues 637-641 are Extracellular-facing; that stretch reads AKTFF. A helical transmembrane segment spans residues 642-662; sequence YTALVIPLIITSLIFGYVCRQ. The Cytoplasmic segment spans residues 663-724; the sequence is KFYGGFEHTA…YQDFNAIAGV (62 aa).

Belongs to the CSC1 (TC 1.A.17) family. As to quaternary structure, homodimer.

The protein localises to the membrane. Functionally, acts as a hyperosmolarity-gated non-selective cation channel that permeates Ca(2+) ions. Mechanosensitive ion channel that converts mechanical stimuli into a flow of ions: activated in response to membrane stretch. Not activated in response to membrane poke. The sequence is that of Hyperosmolality-gated Ca2+ permeable channel 3.1 from Arabidopsis thaliana (Mouse-ear cress).